The sequence spans 542 residues: Chaperonin GroEL 2 (542 aa).

ATP-binding positions include 30–33 (TLGP), Lys51, 87–91 (DGTTT), Gly415, and Asp496.

Belongs to the chaperonin (HSP60) family. Forms a cylinder of 14 subunits composed of two heptameric rings stacked back-to-back. Interacts with the co-chaperonin GroES.

It localises to the cytoplasm. The catalysed reaction is ATP + H2O + a folded polypeptide = ADP + phosphate + an unfolded polypeptide.. Its function is as follows. Together with its co-chaperonin GroES, plays an essential role in assisting protein folding. The GroEL-GroES system forms a nano-cage that allows encapsulation of the non-native substrate proteins and provides a physical environment optimized to promote and accelerate protein folding. This chain is Chaperonin GroEL 2, found in Rhizobium leguminosarum.